The primary structure comprises 300 residues: Putative heme-binding peroxidase (300 aa).

Catalysis depends on His39, which acts as the Proton acceptor. Disordered stretches follow at residues 44–64 (YDKS…EAEG) and 116–135 (GRTD…LPDA). Residues 116–126 (GRTDFADDSRV) are compositionally biased toward basic and acidic residues. Heme b is bound at residue His163. Trp179 acts as the Tryptophan radical intermediate in catalysis.

Belongs to the peroxidase family. Cytochrome c peroxidase subfamily. Requires heme b as cofactor.

Destroys radicals which are normally produced within the cells and which are toxic to biological systems. The polypeptide is Putative heme-binding peroxidase (Pyricularia oryzae (strain 70-15 / ATCC MYA-4617 / FGSC 8958) (Rice blast fungus)).